Reading from the N-terminus, the 301-residue chain is GTPase Era (301 aa).

The Era-type G domain maps to 11 to 180 (RSGIITLVGR…KDVFFENCLN (170 aa)). Residues 19 to 26 (GRPNVGKS) form a G1 region. Position 19-26 (19-26 (GRPNVGKS)) interacts with GTP. The segment at 45 to 49 (QTTRR) is G2. The G3 stretch occupies residues 66–69 (DTPG). Residues 66–70 (DTPGI) and 129–132 (TKID) each bind GTP. The interval 129–132 (TKID) is G4. A G5 region spans residues 159-161 (VSA). The 77-residue stretch at 210–286 (LEQEIPHSLL…YLRLIVKVVK (77 aa)) folds into the KH type-2 domain.

It belongs to the TRAFAC class TrmE-Era-EngA-EngB-Septin-like GTPase superfamily. Era GTPase family. As to quaternary structure, monomer.

Its subcellular location is the cytoplasm. The protein resides in the cell membrane. Functionally, an essential GTPase that binds both GDP and GTP, with rapid nucleotide exchange. Plays a role in 16S rRNA processing and 30S ribosomal subunit biogenesis and possibly also in cell cycle regulation and energy metabolism. This Tropheryma whipplei (strain TW08/27) (Whipple's bacillus) protein is GTPase Era.